The following is a 194-amino-acid chain: Large ribosomal subunit protein bL12m (194 aa).

A mitochondrion-targeting transit peptide spans 1–33; the sequence is MSLRILAKRSSSIWMKTRVTPALISPITITTRF. The N-linked (GlcNAc...) asparagine glycan is linked to Asn-34. The interval 101–120 is disordered; that stretch reads AGNVPSSTGEAGSGAEEEAK. Over residues 105 to 114 the composition is skewed to low complexity; the sequence is PSSTGEAGSG.

Belongs to the bacterial ribosomal protein bL12 family. In terms of assembly, component of the mitochondrial large ribosomal subunit (mt-LSU). Mature yeast 74S mitochondrial ribosomes consist of a small (37S) and a large (54S) subunit. The 37S small subunit contains a 15S ribosomal RNA (15S mt-rRNA) and 34 different proteins. The 54S large subunit contains a 21S rRNA (21S mt-rRNA) and 46 different proteins. Post-translationally, N-glycosylated.

It is found in the mitochondrion. Its function is as follows. Component of the mitochondrial ribosome (mitoribosome), a dedicated translation machinery responsible for the synthesis of mitochondrial genome-encoded proteins, including at least some of the essential transmembrane subunits of the mitochondrial respiratory chain. The mitoribosomes are attached to the mitochondrial inner membrane and translation products are cotranslationally integrated into the membrane. The protein is Large ribosomal subunit protein bL12m (MNP1) of Saccharomyces cerevisiae (strain ATCC 204508 / S288c) (Baker's yeast).